The sequence spans 126 residues: Histone H2B type 1-J (126 aa).

The segment covering 1–12 (MPEPAKSAPAPK) has biased composition (low complexity). Residues 1 to 35 (MPEPAKSAPAPKKGSKKAVTKAQKKDGKKRKRSRK) are disordered. An N-acetylproline modification is found at P2. Position 3 is an ADP-ribosyl glutamic acid (E3). K6 is subject to N6-(2-hydroxyisobutyryl)lysine; alternate. K6 carries the N6-(beta-hydroxybutyryl)lysine; alternate modification. At K6 the chain carries N6-acetyllysine; alternate. N6-butyryllysine; alternate is present on K6. N6-crotonyllysine; alternate is present on K6. At K6 the chain carries N6-lactoyllysine; alternate. K6 participates in a covalent cross-link: Glycyl lysine isopeptide (Lys-Gly) (interchain with G-Cter in SUMO2); alternate. At S7 the chain carries ADP-ribosylserine. K12 carries the post-translational modification N6-(beta-hydroxybutyryl)lysine; alternate. K12 and K13 each carry N6-acetyllysine; alternate. Residues K12 and K13 each carry the N6-crotonyllysine; alternate modification. N6-lactoyllysine; alternate is present on K12. K13 is modified (N6-(2-hydroxyisobutyryl)lysine; alternate). Phosphoserine; by STK4/MST1 is present on S15. Residues K16, K17, K21, and K24 each carry the N6-acetyllysine; alternate modification. Residues K16, K17, K21, and K24 each carry the N6-crotonyllysine; alternate modification. K16, K17, K21, and K24 each carry N6-lactoyllysine; alternate. An N6-(beta-hydroxybutyryl)lysine; alternate mark is found at K17 and K21. Position 17 is an N6-glutaryllysine; alternate (K17). K21 and K24 each carry N6-(2-hydroxyisobutyryl)lysine; alternate. At K21 the chain carries N6-butyryllysine; alternate. Residue K21 forms a Glycyl lysine isopeptide (Lys-Gly) (interchain with G-Cter in SUMO2); alternate linkage. K25 carries the N6-(2-hydroxyisobutyryl)lysine modification. An N6-(2-hydroxyisobutyryl)lysine; alternate modification is found at K35. K35 is subject to N6-(beta-hydroxybutyryl)lysine; alternate. K35 carries the N6-crotonyllysine; alternate modification. Residue K35 is modified to N6-glutaryllysine; alternate. K35 carries the post-translational modification N6-succinyllysine; alternate. K35 participates in a covalent cross-link: Glycyl lysine isopeptide (Lys-Gly) (interchain with G-Cter in ubiquitin); alternate. A PolyADP-ribosyl glutamic acid modification is found at E36. At S37 the chain carries Phosphoserine; by AMPK. 3 positions are modified to N6-(2-hydroxyisobutyryl)lysine; alternate: K44, K47, and K58. The residue at position 44 (K44) is an N6-lactoyllysine; alternate. 2 positions are modified to N6-glutaryllysine; alternate: K44 and K47. The residue at position 47 (K47) is an N6-methyllysine; alternate. An N6,N6-dimethyllysine; alternate modification is found at K58. R80 is subject to Dimethylated arginine. K86 carries the N6-(2-hydroxyisobutyryl)lysine; alternate modification. K86 bears the N6-(beta-hydroxybutyryl)lysine; alternate mark. Position 86 is an N6-acetyllysine; alternate (K86). The residue at position 86 (K86) is an N6-lactoyllysine; alternate. K86 carries the N6,N6,N6-trimethyllysine; alternate modification. An omega-N-methylarginine mark is found at R87 and R93. N6-(2-hydroxyisobutyryl)lysine; alternate is present on K109. K109 carries the N6-lactoyllysine; alternate modification. K109 carries the post-translational modification N6-glutaryllysine; alternate. K109 carries the N6-methyllysine; alternate modification. Residue S113 is glycosylated (O-linked (GlcNAc) serine). Phosphothreonine is present on T116. K117 and K121 each carry N6-(2-hydroxyisobutyryl)lysine; alternate. Residues K117 and K121 each carry the N6-(beta-hydroxybutyryl)lysine; alternate modification. N6-lactoyllysine; alternate occurs at positions 117 and 121. An N6-glutaryllysine; alternate mark is found at K117 and K121. 2 positions are modified to N6-succinyllysine; alternate: K117 and K121. Residue K117 is modified to N6-malonyllysine; alternate. Residue K117 is modified to N6-methylated lysine; alternate. Residue K121 forms a Glycyl lysine isopeptide (Lys-Gly) (interchain with G-Cter in ubiquitin); alternate linkage.

This sequence belongs to the histone H2B family. In terms of assembly, the nucleosome is a histone octamer containing two molecules each of H2A, H2B, H3 and H4 assembled in one H3-H4 heterotetramer and two H2A-H2B heterodimers. The octamer wraps approximately 147 bp of DNA. Heterodimer H2BC11 and H2AZ1 interacts with VPS72 (via N-terminal domain). Post-translationally, monoubiquitination at Lys-35 (H2BK34Ub) by the MSL1/MSL2 dimer is required for histone H3 'Lys-4' (H3K4me) and 'Lys-79' (H3K79me) methylation and transcription activation at specific gene loci, such as HOXA9 and MEIS1 loci. Similarly, monoubiquitination at Lys-121 (H2BK120Ub) by the RNF20/40 complex gives a specific tag for epigenetic transcriptional activation and is also prerequisite for histone H3 'Lys-4' and 'Lys-79' methylation. It also functions cooperatively with the FACT dimer to stimulate elongation by RNA polymerase II. H2BK120Ub also acts as a regulator of mRNA splicing: deubiquitination by USP49 is required for efficient cotranscriptional splicing of a large set of exons. Phosphorylation at Ser-37 (H2BS36ph) by AMPK in response to stress promotes transcription. Phosphorylated on Ser-15 (H2BS14ph) by STK4/MST1 during apoptosis; which facilitates apoptotic chromatin condensation. Also phosphorylated on Ser-15 in response to DNA double strand breaks (DSBs), and in correlation with somatic hypermutation and immunoglobulin class-switch recombination. In terms of processing, glcNAcylation at Ser-113 promotes monoubiquitination of Lys-121. It fluctuates in response to extracellular glucose, and associates with transcribed genes. Post-translationally, ADP-ribosylated by PARP1 or PARP2 on Ser-7 (H2BS6ADPr) in response to DNA damage. H2BS6ADPr promotes recruitment of CHD1L. Mono-ADP-ribosylated on Glu-3 (H2BE2ADPr) by PARP3 in response to single-strand breaks. Poly ADP-ribosylation on Glu-36 (H2BE35ADPr) by PARP1 regulates adipogenesis: it inhibits phosphorylation at Ser-37 (H2BS36ph), thereby blocking expression of pro-adipogenetic genes. Crotonylation (Kcr) is specifically present in male germ cells and marks testis-specific genes in post-meiotic cells, including X-linked genes that escape sex chromosome inactivation in haploid cells. Crotonylation marks active promoters and enhancers and confers resistance to transcriptional repressors. It is also associated with post-meiotically activated genes on autosomes. In terms of processing, lactylated in macrophages by EP300/P300 by using lactoyl-CoA directly derived from endogenous or exogenous lactate, leading to stimulates gene transcription.

The protein resides in the nucleus. It localises to the chromosome. Functionally, core component of nucleosome. Nucleosomes wrap and compact DNA into chromatin, limiting DNA accessibility to the cellular machineries which require DNA as a template. Histones thereby play a central role in transcription regulation, DNA repair, DNA replication and chromosomal stability. DNA accessibility is regulated via a complex set of post-translational modifications of histones, also called histone code, and nucleosome remodeling. In terms of biological role, has broad antibacterial activity. May contribute to the formation of the functional antimicrobial barrier of the colonic epithelium, and to the bactericidal activity of amniotic fluid. The sequence is that of Histone H2B type 1-J from Homo sapiens (Human).